The chain runs to 408 residues: MLIEHLNRQLREREAQSLRRRRRIAETPCAPHQRVSLDGQTASEARELLAFCSNDYLGLANHPALIGALAEGARLWGAGAGASHLISGHTRAHAALEDTLAEWAAPNIPGAKALSFCTGYMANLALLTALGDAEATLFADKLNHASLVDGALLAKAKLQRYAHRQFDVLERQLAACTTPIKLIVTDAVFSMDGDLAELDQLLSLAERFDAWLVIDDAHGFGVLGPKGRGSLAHFGLRSERLILMGTLGKAAGLGGAFVAAHPSVIDWLVQSARAYIYTTAAPPAIAHALSASLALIAGDEGEARRQHLRELIAALRCQLAALIAAQPQLGWRLAESDTAIQPLIVGSNDSALALAAALDAQGLWVPAIRPPTVPVGTARLRITLSAAHSQADVTRLVAALATTARELA.

Residue Arg-20 coordinates substrate. Residue 119–120 (GY) coordinates pyridoxal 5'-phosphate. His-144 contributes to the substrate binding site. Residues Ser-190, His-218, and Thr-246 each contribute to the pyridoxal 5'-phosphate site. Lys-249 is modified (N6-(pyridoxal phosphate)lysine). Thr-372 contributes to the substrate binding site.

It belongs to the class-II pyridoxal-phosphate-dependent aminotransferase family. BioF subfamily. In terms of assembly, homodimer. It depends on pyridoxal 5'-phosphate as a cofactor.

It catalyses the reaction 6-carboxyhexanoyl-[ACP] + L-alanine + H(+) = (8S)-8-amino-7-oxononanoate + holo-[ACP] + CO2. It functions in the pathway cofactor biosynthesis; biotin biosynthesis. Its function is as follows. Catalyzes the decarboxylative condensation of pimeloyl-[acyl-carrier protein] and L-alanine to produce 8-amino-7-oxononanoate (AON), [acyl-carrier protein], and carbon dioxide. This Leptothrix cholodnii (strain ATCC 51168 / LMG 8142 / SP-6) (Leptothrix discophora (strain SP-6)) protein is 8-amino-7-oxononanoate synthase.